Here is an 884-residue protein sequence, read N- to C-terminus: DNA replication licensing factor mcm2 (884 aa).

The segment covering methionine 1–threonine 16 has biased composition (polar residues). 2 disordered regions span residues methionine 1 to alanine 61 and leucine 120 to glutamate 151. Residues proline 47–isoleucine 58 are compositionally biased toward acidic residues. The segment at cysteine 314–cysteine 340 adopts a C4-type zinc-finger fold. An MCM domain is found at isoleucine 458–valine 664. ADP is bound by residues serine 515 and glutamine 516. The short motif at serine 640 to aspartate 643 is the Arginine finger element.

This sequence belongs to the MCM family. In terms of assembly, component of the mcm2-7 complex (RLF-M). The complex forms a toroidal hexameric ring with the proposed subunit order mcm2-mcm6-mcm4-mcm7-mcm3-mcm5. Component of the replisome complex. Component of the CMG helicase complex, composed of the mcm2-7 complex, the GINS complex and cdc45. Post-translationally, may be in a phosphorylated state in the mitotic mcm complex. Phosphorylated in the interphase mcm complex. Phosphorylated by the cdc7-dbf4 and cdc7-dbf4b complexes.

The protein resides in the nucleus. It localises to the chromosome. It catalyses the reaction ATP + H2O = ADP + phosphate + H(+). Functionally, acts as a component of the MCM2-7 complex (MCM complex) which is the replicative helicase essential for 'once per cell cycle' DNA replication initiation and elongation in eukaryotic cells. Core component of CDC45-MCM-GINS (CMG) helicase, the molecular machine that unwinds template DNA during replication, and around which the replisome is built. The active ATPase sites in the MCM2-7 ring are formed through the interaction surfaces of two neighboring subunits such that a critical structure of a conserved arginine finger motif is provided in trans relative to the ATP-binding site of the Walker A box of the adjacent subunit. The six ATPase active sites, however, are likely to contribute differentially to the complex helicase activity. Required for the entry in S phase and for cell division. The protein is DNA replication licensing factor mcm2 of Xenopus tropicalis (Western clawed frog).